Reading from the N-terminus, the 207-residue chain is Large ribosomal subunit protein uL4 (207 aa).

A disordered region spans residues 50–76; sequence KTKTVSEVSGTTKKPFKQKGTGNARQG.

This sequence belongs to the universal ribosomal protein uL4 family. Part of the 50S ribosomal subunit.

Functionally, one of the primary rRNA binding proteins, this protein initially binds near the 5'-end of the 23S rRNA. It is important during the early stages of 50S assembly. It makes multiple contacts with different domains of the 23S rRNA in the assembled 50S subunit and ribosome. Its function is as follows. Forms part of the polypeptide exit tunnel. In Rickettsia typhi (strain ATCC VR-144 / Wilmington), this protein is Large ribosomal subunit protein uL4.